A 508-amino-acid chain; its full sequence is Photosystem II CP47 reaction center protein (508 aa).

6 helical membrane-spanning segments follow: residues 21 to 36, 101 to 115, 140 to 156, 203 to 218, 237 to 252, and 457 to 472; these read AVHI…WAGS, IVFS…IWHW, GIHL…FGAF, IAAG…FHLS, VLSS…AFVV, and SFAL…HGSR.

This sequence belongs to the PsbB/PsbC family. PsbB subfamily. PSII is composed of 1 copy each of membrane proteins PsbA, PsbB, PsbC, PsbD, PsbE, PsbF, PsbH, PsbI, PsbJ, PsbK, PsbL, PsbM, PsbT, PsbX, PsbY, PsbZ, Psb30/Ycf12, at least 3 peripheral proteins of the oxygen-evolving complex and a large number of cofactors. It forms dimeric complexes. Requires Binds multiple chlorophylls. PSII binds additional chlorophylls, carotenoids and specific lipids. as cofactor.

It localises to the plastid. Its subcellular location is the chloroplast thylakoid membrane. In terms of biological role, one of the components of the core complex of photosystem II (PSII). It binds chlorophyll and helps catalyze the primary light-induced photochemical processes of PSII. PSII is a light-driven water:plastoquinone oxidoreductase, using light energy to abstract electrons from H(2)O, generating O(2) and a proton gradient subsequently used for ATP formation. The chain is Photosystem II CP47 reaction center protein from Populus trichocarpa (Western balsam poplar).